The primary structure comprises 268 residues: L-cystine-binding protein TcyA (268 aa).

An N-terminal signal peptide occupies residues 1 to 19; it reads MKKALLALFMVVSIAALAA. A lipid anchor (N-palmitoyl cysteine) is attached at cysteine 20. A lipid anchor (S-diacylglycerol cysteine) is attached at cysteine 20.

This sequence belongs to the bacterial solute-binding protein 3 family. In terms of assembly, the complex is composed of two ATP-binding proteins (TcyC), two transmembrane proteins (TcyB) and a solute-binding protein (TcyA).

Its subcellular location is the cell membrane. Part of the ABC transporter complex TcyABC involved in L-cystine import. The protein is L-cystine-binding protein TcyA (tcyA) of Bacillus subtilis (strain 168).